A 613-amino-acid polypeptide reads, in one-letter code: UvrABC system protein C (613 aa).

Residues 12 to 89 (DHPGVYIMHD…IKQHRPRYNV (78 aa)) form the GIY-YIG domain. A UVR domain is found at 199 to 234 (TALVKELKEQMEAAAARLEFEKAARLRDQLRAVQEV).

It belongs to the UvrC family. In terms of assembly, interacts with UvrB in an incision complex.

The protein localises to the cytoplasm. Its function is as follows. The UvrABC repair system catalyzes the recognition and processing of DNA lesions. UvrC both incises the 5' and 3' sides of the lesion. The N-terminal half is responsible for the 3' incision and the C-terminal half is responsible for the 5' incision. This is UvrABC system protein C from Moorella thermoacetica (strain ATCC 39073 / JCM 9320).